The chain runs to 163 residues: Large ribosomal subunit protein uL10 (163 aa).

It belongs to the universal ribosomal protein uL10 family. Part of the ribosomal stalk of the 50S ribosomal subunit. The N-terminus interacts with L11 and the large rRNA to form the base of the stalk. The C-terminus forms an elongated spine to which L12 dimers bind in a sequential fashion forming a multimeric L10(L12)X complex.

Forms part of the ribosomal stalk, playing a central role in the interaction of the ribosome with GTP-bound translation factors. The protein is Large ribosomal subunit protein uL10 of Histophilus somni (strain 2336) (Haemophilus somnus).